The sequence spans 79 residues: Acyl carrier protein (79 aa).

In terms of domain architecture, Carrier spans 2-79 (ASKEEILAGL…QDAVDFIXGA (78 aa)). Serine 40 is subject to O-(pantetheine 4'-phosphoryl)serine.

This sequence belongs to the acyl carrier protein (ACP) family. Post-translationally, 4'-phosphopantetheine is transferred from CoA to a specific serine of apo-ACP by AcpS. This modification is essential for activity because fatty acids are bound in thioester linkage to the sulfhydryl of the prosthetic group.

The protein localises to the cytoplasm. It functions in the pathway lipid metabolism; fatty acid biosynthesis. In terms of biological role, carrier of the growing fatty acid chain in fatty acid biosynthesis. This chain is Acyl carrier protein, found in Myxococcus xanthus.